Here is a 117-residue protein sequence, read N- to C-terminus: Prefoldin subunit beta (117 aa).

Belongs to the prefoldin subunit beta family. As to quaternary structure, heterohexamer of two alpha and four beta subunits.

The protein resides in the cytoplasm. Functionally, molecular chaperone capable of stabilizing a range of proteins. Seems to fulfill an ATP-independent, HSP70-like function in archaeal de novo protein folding. The protein is Prefoldin subunit beta of Thermococcus gammatolerans (strain DSM 15229 / JCM 11827 / EJ3).